The chain runs to 201 residues: Imidazole glycerol phosphate synthase subunit HisH (201 aa).

In terms of domain architecture, Glutamine amidotransferase type-1 spans 1 to 201 (MVFIADYGAG…LQVLKNFAEF (201 aa)). The Nucleophile role is filled by Cys79. Active-site residues include His183 and Glu185.

In terms of assembly, heterodimer of HisH and HisF.

It is found in the cytoplasm. It catalyses the reaction 5-[(5-phospho-1-deoxy-D-ribulos-1-ylimino)methylamino]-1-(5-phospho-beta-D-ribosyl)imidazole-4-carboxamide + L-glutamine = D-erythro-1-(imidazol-4-yl)glycerol 3-phosphate + 5-amino-1-(5-phospho-beta-D-ribosyl)imidazole-4-carboxamide + L-glutamate + H(+). It carries out the reaction L-glutamine + H2O = L-glutamate + NH4(+). It participates in amino-acid biosynthesis; L-histidine biosynthesis; L-histidine from 5-phospho-alpha-D-ribose 1-diphosphate: step 5/9. Its function is as follows. IGPS catalyzes the conversion of PRFAR and glutamine to IGP, AICAR and glutamate. The HisH subunit catalyzes the hydrolysis of glutamine to glutamate and ammonia as part of the synthesis of IGP and AICAR. The resulting ammonia molecule is channeled to the active site of HisF. The chain is Imidazole glycerol phosphate synthase subunit HisH from Chlorobaculum tepidum (strain ATCC 49652 / DSM 12025 / NBRC 103806 / TLS) (Chlorobium tepidum).